The primary structure comprises 562 residues: uncharacterized protein (562 aa).

5 helical membrane passes run 10–27 (IYPE…YWVG), 34–53 (FSLG…GQFD), 63–85 (IFFL…QGIA), 92–114 (ALFA…KIAG), and 155–177 (FSVI…AIVL). 2 RCK C-terminal domains span residues 204-288 (TENA…HPDS) and 290-377 (DETQ…QLGV). The next 6 membrane-spanning stretches (helical) occupy residues 387-404 (VAFW…GSLV), 408-430 (GNLP…FSWV), 443-465 (PTVW…ISAG), 475-497 (LGFS…AALV), 504-526 (FHPA…LGMI), and 539-561 (YTIT…ILIL).

It belongs to the AAE transporter (TC 2.A.81) family.

It localises to the cell membrane. This is an uncharacterized protein from Shewanella oneidensis (strain ATCC 700550 / JCM 31522 / CIP 106686 / LMG 19005 / NCIMB 14063 / MR-1).